A 795-amino-acid polypeptide reads, in one-letter code: Phenylalanine--tRNA ligase beta subunit (795 aa).

In terms of domain architecture, tRNA-binding spans 39–149 (SGEFSGVVVA…ADAPIGVDIR (111 aa)). The B5 domain maps to 402 to 477 (PKQPIIRLRR…RIYGYNRIPN (76 aa)). The Mg(2+) site is built by Asp-455, Asp-461, Glu-464, and Glu-465. Residues 701–794 (SKFPANNRDI…LAQRFQASLR (94 aa)) form the FDX-ACB domain.

Belongs to the phenylalanyl-tRNA synthetase beta subunit family. Type 1 subfamily. Tetramer of two alpha and two beta subunits. Requires Mg(2+) as cofactor.

It localises to the cytoplasm. The enzyme catalyses tRNA(Phe) + L-phenylalanine + ATP = L-phenylalanyl-tRNA(Phe) + AMP + diphosphate + H(+). This chain is Phenylalanine--tRNA ligase beta subunit, found in Haemophilus ducreyi (strain 35000HP / ATCC 700724).